The primary structure comprises 215 residues: MOB kinase activator-like 1B (215 aa).

The segment at 1-25 is disordered; sequence MSLFGLGRNQKTFRPKKSAPSGTKG. 4 residues coordinate Zn(2+): cysteine 79, cysteine 84, histidine 161, and histidine 166.

Belongs to the MOB1/phocein family. As to quaternary structure, interacts with SIK1. As to expression, expression is detected along the vasculature in cotyledons, hypocotyls and roots of 3- to 4-day-old seedlings.

The chain is MOB kinase activator-like 1B from Arabidopsis thaliana (Mouse-ear cress).